A 166-amino-acid chain; its full sequence is Cyclin-dependent kinase 4 inhibitor D (166 aa).

An N-acetylmethionine modification is found at Met-1. 4 ANK repeats span residues 41–69 (FGKT…SPNV), 73–102 (SGTT…DVNA), 106–135 (TGAL…LHHR), and 138–166 (TGLT…VAPL).

Belongs to the CDKN2 cyclin-dependent kinase inhibitor family. In terms of assembly, interacts with CDK6.

The protein resides in the nucleus. Its subcellular location is the cytoplasm. In terms of biological role, interacts strongly with CDK4 and CDK6 and inhibits them. The sequence is that of Cyclin-dependent kinase 4 inhibitor D (CDKN2D) from Bos taurus (Bovine).